The sequence spans 198 residues: MVITLPKLKYALNALSPHISEETLNFHYNKHHAGYVNKLNTLIKDTPFAEKSLLDIVKESSGAIFNNAAQIWNHTFYWDSMGPDCGGEPHGEIKEKIQEDFGSFNNFKEQFSNILCGHFGSGWGWLALNNNNKLVILQTHDAGNPIKDNTGIPILTCDIWEHAYYIDYRNDRASYVKAWWNLVNWNFANENLKKAMKK.

Fe cation-binding residues include H27, H74, D158, and H162.

Belongs to the iron/manganese superoxide dismutase family. In terms of assembly, homodimer. It depends on Fe cation as a cofactor.

The protein resides in the cytoplasm. The enzyme catalyses 2 superoxide + 2 H(+) = H2O2 + O2. Destroys superoxide anion radicals which are normally produced within the cells and which are toxic to biological systems. This Plasmodium falciparum (isolate HB3) protein is Superoxide dismutase [Fe] (SODB).